Here is a 239-residue protein sequence, read N- to C-terminus: Riboflavin synthase (239 aa).

Lumazine-binding repeat units lie at residues 1 to 105 (MFTG…MGGH) and 106 to 205 (VVQG…EKQI). 2,4-dihydroxypteridine contacts are provided by residues 4 to 6 (GLV), 54 to 56 (CLT), 70 to 75 (GISPET), 109 to 111 (GHV), lysine 145, 154 to 156 (SLT), and 170 to 175 (SMVSYT).

Homotrimer.

The catalysed reaction is 2 6,7-dimethyl-8-(1-D-ribityl)lumazine + H(+) = 5-amino-6-(D-ribitylamino)uracil + riboflavin. Its pathway is cofactor biosynthesis; riboflavin biosynthesis; riboflavin from 2-hydroxy-3-oxobutyl phosphate and 5-amino-6-(D-ribitylamino)uracil: step 2/2. Functionally, catalyzes the dismutation of two molecules of 6,7-dimethyl-8-ribityllumazine, resulting in the formation of riboflavin and 5-amino-6-(D-ribitylamino)uracil. The polypeptide is Riboflavin synthase (RIB5) (Meyerozyma guilliermondii (strain ATCC 6260 / CBS 566 / DSM 6381 / JCM 1539 / NBRC 10279 / NRRL Y-324) (Yeast)).